A 335-amino-acid polypeptide reads, in one-letter code: Anthranilate phosphoribosyltransferase (335 aa).

5-phospho-alpha-D-ribose 1-diphosphate contacts are provided by residues glycine 79, glycine 82–aspartate 83, threonine 87, asparagine 89–threonine 92, lysine 107–serine 115, and serine 119. An anthranilate-binding site is contributed by glycine 79. Position 91 (serine 91) interacts with Mg(2+). Asparagine 110 lines the anthranilate pocket. Arginine 165 lines the anthranilate pocket. Mg(2+) contacts are provided by aspartate 223 and glutamate 224.

Belongs to the anthranilate phosphoribosyltransferase family. As to quaternary structure, homodimer. Mg(2+) serves as cofactor.

It catalyses the reaction N-(5-phospho-beta-D-ribosyl)anthranilate + diphosphate = 5-phospho-alpha-D-ribose 1-diphosphate + anthranilate. Its pathway is amino-acid biosynthesis; L-tryptophan biosynthesis; L-tryptophan from chorismate: step 2/5. Catalyzes the transfer of the phosphoribosyl group of 5-phosphorylribose-1-pyrophosphate (PRPP) to anthranilate to yield N-(5'-phosphoribosyl)-anthranilate (PRA). The protein is Anthranilate phosphoribosyltransferase of Buchnera aphidicola subsp. Schizaphis graminum (strain Sg).